The following is a 376-amino-acid chain: Heme chaperone HemW (376 aa).

Residues 1–236 (MFKLPPISLY…LKQSGYKKYE (236 aa)) form the Radical SAM core domain. Residue Y10 participates in S-adenosyl-L-methionine binding. [4Fe-4S] cluster-binding residues include C16, C20, and C23. S-adenosyl-L-methionine contacts are provided by residues G66, 67–68 (GT), E99, Q126, R138, and D162.

The protein belongs to the anaerobic coproporphyrinogen-III oxidase family. HemW subfamily. The cofactor is [4Fe-4S] cluster.

The protein resides in the cytoplasm. In terms of biological role, probably acts as a heme chaperone, transferring heme to an unknown acceptor. Binds one molecule of heme per monomer, possibly covalently. Binds 1 [4Fe-4S] cluster. The cluster is coordinated with 3 cysteines and an exchangeable S-adenosyl-L-methionine. The polypeptide is Heme chaperone HemW (Buchnera aphidicola subsp. Schizaphis graminum (strain Sg)).